We begin with the raw amino-acid sequence, 164 residues long: FMN reductase (NADH) RutF (164 aa).

This sequence belongs to the non-flavoprotein flavin reductase family. RutF subfamily.

The catalysed reaction is FMNH2 + NAD(+) = FMN + NADH + 2 H(+). Catalyzes the reduction of FMN to FMNH2 which is used to reduce pyrimidine by RutA via the Rut pathway. This Enterobacter cloacae subsp. cloacae (strain ATCC 13047 / DSM 30054 / NBRC 13535 / NCTC 10005 / WDCM 00083 / NCDC 279-56) protein is FMN reductase (NADH) RutF.